The sequence spans 318 residues: GPN-loop GTPase 2 (318 aa).

29 to 34 provides a ligand contact to GTP; the sequence is GSGKST. The Gly-Pro-Asn (GPN)-loop; involved in dimer interface motif lies at 85-87; sequence GPN. Residue 187 to 190 participates in GTP binding; the sequence is SKMD.

The protein belongs to the GPN-loop GTPase family. Heterodimers with gpn1 or gpn3. Binds to RNA polymerase II (RNAPII).

Functionally, small GTPase required for proper localization of RNA polymerase II and III (RNAPII and RNAPIII). May act at an RNAP assembly step prior to nuclear import. The sequence is that of GPN-loop GTPase 2 from Xenopus laevis (African clawed frog).